We begin with the raw amino-acid sequence, 505 residues long: Annexin A11 (505 aa).

Pro residues-rich tracts occupy residues 1-17 (MSYPGYPPPPGGYPPAA) and 99-160 (PVPP…PVPL). Disordered regions lie at residues 1-38 (MSYPGYPPPPGGYPPAAPGGGPWGGAAYPPPPSMPPIG) and 84-199 (PVPP…DAPG). The span at 161 to 177 (PGQQQPVPSYPGYPGSG) shows a compositional bias: low complexity. Annexin repeat units follow at residues 200-271 (FDPL…ALMK), 272-343 (TPVL…SLSQ), 355-427 (SLAQ…AVVK), and 431-502 (NTPA…KICG). N6-acetyllysine is present on residues Lys-248 and Lys-255. Position 479 is an N6-acetyllysine (Lys-479).

It belongs to the annexin family. Interacts with S100A6. Interacts with PDCD6 in a calcium-dependent manner. Interacts with KIF23 during cytokinesis.

Its subcellular location is the cytoplasm. The protein resides in the melanosome. The protein localises to the nucleus envelope. It localises to the nucleus. It is found in the nucleoplasm. Its subcellular location is the cytoskeleton. The protein resides in the spindle. Binds specifically to calcyclin in a calcium-dependent manner. Required for midbody formation and completion of the terminal phase of cytokinesis. In Homo sapiens (Human), this protein is Annexin A11 (ANXA11).